Consider the following 89-residue polypeptide: Small ribosomal subunit protein uS17 (89 aa).

This sequence belongs to the universal ribosomal protein uS17 family. In terms of assembly, part of the 30S ribosomal subunit.

Its function is as follows. One of the primary rRNA binding proteins, it binds specifically to the 5'-end of 16S ribosomal RNA. The protein is Small ribosomal subunit protein uS17 of Variovorax paradoxus (strain S110).